A 362-amino-acid chain; its full sequence is Phosphoserine aminotransferase (362 aa).

Arg-42 is an L-glutamate binding site. Residues 76 to 77 (AR), Trp-102, Thr-154, Asp-174, and Gln-197 contribute to the pyridoxal 5'-phosphate site. Lys-198 is modified (N6-(pyridoxal phosphate)lysine). 239–240 (NT) lines the pyridoxal 5'-phosphate pocket.

This sequence belongs to the class-V pyridoxal-phosphate-dependent aminotransferase family. SerC subfamily. As to quaternary structure, homodimer. The cofactor is pyridoxal 5'-phosphate.

The protein resides in the cytoplasm. The enzyme catalyses O-phospho-L-serine + 2-oxoglutarate = 3-phosphooxypyruvate + L-glutamate. It catalyses the reaction 4-(phosphooxy)-L-threonine + 2-oxoglutarate = (R)-3-hydroxy-2-oxo-4-phosphooxybutanoate + L-glutamate. It participates in amino-acid biosynthesis; L-serine biosynthesis; L-serine from 3-phospho-D-glycerate: step 2/3. Its pathway is cofactor biosynthesis; pyridoxine 5'-phosphate biosynthesis; pyridoxine 5'-phosphate from D-erythrose 4-phosphate: step 3/5. Catalyzes the reversible conversion of 3-phosphohydroxypyruvate to phosphoserine and of 3-hydroxy-2-oxo-4-phosphonooxybutanoate to phosphohydroxythreonine. The chain is Phosphoserine aminotransferase from Buchnera aphidicola subsp. Cinara cedri (strain Cc).